Here is a 146-residue protein sequence, read N- to C-terminus: Large ribosomal subunit protein uL15 (146 aa).

Basic and acidic residues predominate over residues 1 to 13; it reads MKLHELKPAEGSR. Residues 1-65 form a disordered region; it reads MKLHELKPAE…PLYRRLPKRG (65 aa). 2 stretches are compositionally biased toward gly residues: residues 21–31 and 42–52; these read RGIGSGNGKTA and SGGGVRPGFEG.

It belongs to the universal ribosomal protein uL15 family. As to quaternary structure, part of the 50S ribosomal subunit.

In terms of biological role, binds to the 23S rRNA. The polypeptide is Large ribosomal subunit protein uL15 (Halalkalibacterium halodurans (strain ATCC BAA-125 / DSM 18197 / FERM 7344 / JCM 9153 / C-125) (Bacillus halodurans)).